Reading from the N-terminus, the 859-residue chain is MIITPYLNPRLVKPLKWLAIIILLYFLYFSLFSINKKPGKPRKPPKAVENYTCPFEKADFSNFKDKKLEFHKNNGTDPKILVILDSLFSRHGKSIIQILNSQKFAFKAEAISKNLPVLTSAKRGKYSLIIVENYYKYLNMARWNRQLLDKYCKEYRVPLFSFIASKPNDQLKRIRIKGSSLWMWQNQRINRLTVSPSPIHKISKIGAYRNLTTQESDWILFEISENFESILTGTVKNGYERAVVLRDLGREDGVEKVIFGRNLTDFQIKITFLDALWWAMGDEKLFGLDRFVQVDIDDVFVGAQSTRIVEEDVRHLISAQNHFRNFIENFKFLLGFSGSYFRNGDDFEDRGDEILIENAEKFVWFPHMWRHNHAHEHNFTYLESIMVQNRLFAQNMHLPIDYPYAIAPQHDGVFPVHEQMYEAWKKIWNVTVTATEEYPHLKPATGRKGFIHSGIHVLPRQTCGLYTHTQFFDEYPEGFQKVIKSIQGGDLFFTILLNPISIFMTHQQNYAHDRLALYTFENLFRFLNCWTNIRLKWQSPVESAKMYFEKFPEERIPLWTNPCSDPRHQAILPPSMSCSKKSLPDLLIIGPQKTGSTALASFLALHPNVSQNMEIPGSFEEIQFFSGQNYLKGVEWYMSKFPNETTVIFEKSATYFDNPSAARQAAAMVPHAKLVIILQNPTQRAYSWFQSLFQHLIAHKDPIAMSSESLDVILNSTSSESAKFKIRQRCLSGGRYVHHLDKWLEHFSLQQIQFIDSDELRKEPAKVLSSLSKWLDLPEFPFETHIRFSPSKGFHCRLINGKTECLGESKGRKYSEMSQELRQKLDGIFALDNSALFKFLRKNRLKIPDWLEEAVRIRV.

Topologically, residues 1–13 (MIITPYLNPRLVK) are cytoplasmic. The chain crosses the membrane as a helical; Signal-anchor for type II membrane protein span at residues 14–34 (PLKWLAIIILLYFLYFSLFSI). Residues 34–575 (INKKPGKPRK…PRHQAILPPS (542 aa)) form a heparan sulfate N-deacetylase 1 region. Residues 35–859 (NKKPGKPRKP…WLEEAVRIRV (825 aa)) are Lumenal-facing. Residues Asn50, Asn74, Asn210, Asn262, Asn378, and Asn429 are each glycosylated (N-linked (GlcNAc...) asparagine). Residues 576–859 (MSCSKKSLPD…WLEEAVRIRV (284 aa)) are heparan sulfate N-sulfotransferase 1. The active-site For sulfotransferase activity is Lys593. 593–597 (KTGST) provides a ligand contact to 3'-phosphoadenylyl sulfate. Residues Asn608 and Asn643 are each glycosylated (N-linked (GlcNAc...) asparagine). Position 687 (Ser687) interacts with 3'-phosphoadenylyl sulfate. Asn715 is a glycosylation site (N-linked (GlcNAc...) asparagine). Cys796 and Cys805 are joined by a disulfide. 810–814 (KGRKY) lines the 3'-phosphoadenylyl sulfate pocket.

It belongs to the sulfotransferase 1 family. NDST subfamily. As to quaternary structure, monomer.

It localises to the golgi apparatus membrane. It catalyses the reaction alpha-D-glucosaminyl-[heparan sulfate](n) + 3'-phosphoadenylyl sulfate = N-sulfo-alpha-D-glucosaminyl-[heparan sulfate](n) + adenosine 3',5'-bisphosphate + 2 H(+). Its pathway is glycan metabolism; heparan sulfate biosynthesis. It functions in the pathway glycan metabolism; heparin biosynthesis. In terms of biological role, essential bifunctional enzyme that catalyzes both the N-deacetylation and the N-sulfation of glucosamine (GlcNAc) of the glycosaminoglycan in heparan sulfate. Modifies the GlcNAc-GlcA disaccharide repeating sugar backbone to make N-sulfated heparosan, a prerequisite substrate for later modifications in heparin biosynthesis. The chain is Bifunctional heparan sulfate N-deacetylase/N-sulfotransferase 1 (hst-1) from Caenorhabditis briggsae.